The chain runs to 427 residues: Mitochondrial distribution and morphology protein 10 (427 aa).

A compositionally biased stretch (low complexity) spans 393-414 (SSYANSQATAGAQGSSGGPPTS). Residues 393–427 (SSYANSQATAGAQGSSGGPPTSYWRGVGVSVSYSS) are disordered.

The protein belongs to the MDM10 family. In terms of assembly, component of the ER-mitochondria encounter structure (ERMES) or MDM complex, composed of mmm1, mdm10, mdm12 and mdm34. Associates with the mitochondrial outer membrane sorting assembly machinery SAM(core) complex.

The protein localises to the mitochondrion outer membrane. Component of the ERMES/MDM complex, which serves as a molecular tether to connect the endoplasmic reticulum and mitochondria. Components of this complex are involved in the control of mitochondrial shape and protein biogenesis and may function in phospholipid exchange. mdm10 is involved in the late assembly steps of the general translocase of the mitochondrial outer membrane (TOM complex). Functions in the tom40-specific route of the assembly of outer membrane beta-barrel proteins, including the association of tom40 with the receptor tom22 and small TOM proteins. Can associate with the SAM(core) complex as well as the mdm12-mmm1 complex, both involved in late steps of the major beta-barrel assembly pathway, that is responsible for biogenesis of all outer membrane beta-barrel proteins. May act as a switch that shuttles between both complexes and channels precursor proteins into the tom40-specific pathway. Plays a role in mitochondrial morphology and in the inheritance of mitochondria. The sequence is that of Mitochondrial distribution and morphology protein 10 (mdmB) from Emericella nidulans (strain FGSC A4 / ATCC 38163 / CBS 112.46 / NRRL 194 / M139) (Aspergillus nidulans).